The following is a 37-amino-acid chain: Large ribosomal subunit protein bL36 (37 aa).

This sequence belongs to the bacterial ribosomal protein bL36 family.

In Deinococcus deserti (strain DSM 17065 / CIP 109153 / LMG 22923 / VCD115), this protein is Large ribosomal subunit protein bL36.